The chain runs to 324 residues: Putative ribose-phosphate pyrophosphokinase 2 (324 aa).

Residues 43 to 45 (DGE) and 102 to 103 (RQ) contribute to the ATP site. His136 serves as a coordination point for Mg(2+). D-ribose 5-phosphate-binding positions include Asp225 and 229-233 (NTGKT).

Belongs to the ribose-phosphate pyrophosphokinase family. Class I subfamily. Homohexamer. It depends on Mg(2+) as a cofactor.

It is found in the cytoplasm. The enzyme catalyses D-ribose 5-phosphate + ATP = 5-phospho-alpha-D-ribose 1-diphosphate + AMP + H(+). It functions in the pathway metabolic intermediate biosynthesis; 5-phospho-alpha-D-ribose 1-diphosphate biosynthesis; 5-phospho-alpha-D-ribose 1-diphosphate from D-ribose 5-phosphate (route I): step 1/1. Its function is as follows. Involved in the biosynthesis of the central metabolite phospho-alpha-D-ribosyl-1-pyrophosphate (PRPP) via the transfer of pyrophosphoryl group from ATP to 1-hydroxyl of ribose-5-phosphate (Rib-5-P). This Streptococcus agalactiae serotype III (strain NEM316) protein is Putative ribose-phosphate pyrophosphokinase 2.